Reading from the N-terminus, the 322-residue chain is GTP 3',8-cyclase (322 aa).

Residues 4-229 form the Radical SAM core domain; sequence NFNRNIDYLR…IPVQMKKSGP (226 aa). R13 is a binding site for GTP. 2 residues coordinate [4Fe-4S] cluster: C20 and C24. An S-adenosyl-L-methionine-binding site is contributed by Y26. C27 contacts [4Fe-4S] cluster. A GTP-binding site is contributed by R64. Residue G68 coordinates S-adenosyl-L-methionine. T95 provides a ligand contact to GTP. Residue S119 participates in S-adenosyl-L-methionine binding. K156 is a binding site for GTP. M190 provides a ligand contact to S-adenosyl-L-methionine. Positions 253 and 256 each coordinate [4Fe-4S] cluster. 258 to 260 is a GTP binding site; that stretch reads RLR. C270 is a binding site for [4Fe-4S] cluster.

It belongs to the radical SAM superfamily. MoaA family. As to quaternary structure, monomer and homodimer. [4Fe-4S] cluster serves as cofactor.

The catalysed reaction is GTP + AH2 + S-adenosyl-L-methionine = (8S)-3',8-cyclo-7,8-dihydroguanosine 5'-triphosphate + 5'-deoxyadenosine + L-methionine + A + H(+). The protein operates within cofactor biosynthesis; molybdopterin biosynthesis. Functionally, catalyzes the cyclization of GTP to (8S)-3',8-cyclo-7,8-dihydroguanosine 5'-triphosphate. This Thermodesulfovibrio yellowstonii (strain ATCC 51303 / DSM 11347 / YP87) protein is GTP 3',8-cyclase.